Reading from the N-terminus, the 934-residue chain is Serine/threonine-protein kinase PknD (934 aa).

Residues 4-296 (YELIRLIGKG…ELRQALQPYL (293 aa)) enclose the Protein kinase domain. Residues 10-18 (IGKGGMGEV) and K33 contribute to the ATP site. D138 acts as the Proton acceptor in catalysis.

Belongs to the protein kinase superfamily. Ser/Thr protein kinase family. In terms of assembly, interacts with Pkn1. In terms of processing, autophosphorylated on serine and threonine residues. Present in elementary bodies 40 hours post-infection as 2 bands of approximately 55 to 60 and 45 to 50 kDa, which may be due to differential phosphorylation as well as degradation; an enzymatically active full-length protein can also be detected.

It carries out the reaction L-seryl-[protein] + ATP = O-phospho-L-seryl-[protein] + ADP + H(+). The enzyme catalyses L-threonyl-[protein] + ATP = O-phospho-L-threonyl-[protein] + ADP + H(+). Functionally, together with the serine/threonine kinase Pkn1, may play a role in the specific interactions with host proteins during intracellular growth. Autophosphorylates and also phosphorylates Pkn1. This Chlamydia trachomatis serovar L2 (strain ATCC VR-902B / DSM 19102 / 434/Bu) protein is Serine/threonine-protein kinase PknD.